The following is a 584-amino-acid chain: Lamin-B1 (584 aa).

The interval 1–22 is disordered; that stretch reads MAAAVAPLSPQPRGAAASAALS. Residues 2 to 33 form a head region; sequence AAAVAPLSPQPRGAAASAALSPTRISRLQEKE. Ser22 is subject to Phosphoserine. An IF rod domain is found at 31 to 387; that stretch reads EKEELRQLND…KLLESEEERL (357 aa). The tract at residues 34 to 70 is coil 1A; sequence ELRQLNDRLAVYIDKVRSLETENSALQRRVSEREQVC. Residues 81–218 form a coil 1B region; sequence FETELADARK…NVYEEEIKET (138 aa). A coil 2 region spans residues 243–385; that stretch reads QALKEIREQH…YRKLLESEEE (143 aa). Positions 386-584 are tail; sequence RLRLSPGPSS…RKPERSCVVM (199 aa). Disordered regions lie at residues 388–431 and 548–584; these read RLSP…SVSI and TVNEGEEEEEEGEEEILEDVIHQQGSPRKPERSCVVM. Residues 394–408 are compositionally biased toward low complexity; that stretch reads SSRVTVSRASSSRSV. A Nuclear localization signal motif is present at residues 414–419; it reads KRKRID. An LTD domain is found at 429–545; the sequence is VSISHSASAT…EEVAQRSTVF (117 aa). Residues 551–565 show a composition bias toward acidic residues; sequence EGEEEEEEGEEEILE. Positions 575-584 are enriched in basic and acidic residues; it reads RKPERSCVVM. Residue Cys581 is modified to Cysteine methyl ester. The S-farnesyl cysteine moiety is linked to residue Cys581. Positions 582–584 are cleaved as a propeptide — removed in mature form; sequence VVM.

The protein belongs to the intermediate filament family. As to quaternary structure, homodimer. Lamin dimers then assemble into dimeric head-to-tail polymers. Ultimately, two head-to-tail polymers assemble laterally into a protofilament with a uniformly shaped rod of 3.5 nm in diameter. Post-translationally, phosphorylation plays a key role in lamin organization, subcellular localization and nuclear envelope disintegration. Phosphorylation by CDK1 at Ser-22 at the onset of mitosis drives lamin disassembly and nuclear envelope breakdown.

Its subcellular location is the nucleus lamina. It localises to the nucleus envelope. The protein localises to the nucleus. It is found in the nucleoplasm. The protein resides in the nucleus matrix. In terms of biological role, lamins are intermediate filament proteins that assemble into a filamentous meshwork, and which constitute the major components of the nuclear lamina, a fibrous layer on the nucleoplasmic side of the inner nuclear membrane. Lamins provide a framework for the nuclear envelope, bridging the nuclear envelope and chromatin. Plays an important role in nuclear assembly, chromatin organization, nuclear membrane and telomere dynamics. This is Lamin-B1 (LMNB1) from Gallus gallus (Chicken).